The chain runs to 232 residues: 5'-methylthioadenosine/S-adenosylhomocysteine nucleosidase (232 aa).

Glutamate 12 serves as the catalytic Proton acceptor. Substrate is bound by residues glycine 78, isoleucine 152, and 173–174 (ME). Aspartate 197 serves as the catalytic Proton donor.

It belongs to the PNP/UDP phosphorylase family. MtnN subfamily. Homodimer.

The enzyme catalyses S-adenosyl-L-homocysteine + H2O = S-(5-deoxy-D-ribos-5-yl)-L-homocysteine + adenine. It catalyses the reaction S-methyl-5'-thioadenosine + H2O = 5-(methylsulfanyl)-D-ribose + adenine. It carries out the reaction 5'-deoxyadenosine + H2O = 5-deoxy-D-ribose + adenine. Its pathway is amino-acid biosynthesis; L-methionine biosynthesis via salvage pathway; S-methyl-5-thio-alpha-D-ribose 1-phosphate from S-methyl-5'-thioadenosine (hydrolase route): step 1/2. In terms of biological role, catalyzes the irreversible cleavage of the glycosidic bond in both 5'-methylthioadenosine (MTA) and S-adenosylhomocysteine (SAH/AdoHcy) to adenine and the corresponding thioribose, 5'-methylthioribose and S-ribosylhomocysteine, respectively. Also cleaves 5'-deoxyadenosine, a toxic by-product of radical S-adenosylmethionine (SAM) enzymes, into 5-deoxyribose and adenine. Thus, is required for in vivo function of the radical SAM enzymes biotin synthase and lipoic acid synthase, that are inhibited by 5'-deoxyadenosine accumulation. The chain is 5'-methylthioadenosine/S-adenosylhomocysteine nucleosidase from Escherichia coli O9:H4 (strain HS).